The sequence spans 253 residues: Coenzyme F420:L-glutamate ligase (253 aa).

GTP contacts are provided by residues 9–12 (LPEI), 38–39 (ST), and Lys43. Asp113 contributes to the a divalent metal cation binding site. A GTP-binding site is contributed by Asn116. 3 residues coordinate a divalent metal cation: Asp150, Thr151, and Glu208. 206–213 (SGEGDDGT) contributes to the GTP binding site.

This sequence belongs to the CofE family. Homodimer. It depends on Mg(2+) as a cofactor. Requires Mn(2+) as cofactor. K(+) is required as a cofactor.

The enzyme catalyses oxidized coenzyme F420-0 + GTP + L-glutamate = oxidized coenzyme F420-1 + GDP + phosphate + H(+). The catalysed reaction is oxidized coenzyme F420-1 + GTP + L-glutamate = oxidized coenzyme F420-2 + GDP + phosphate + H(+). Its pathway is cofactor biosynthesis; coenzyme F420 biosynthesis. Catalyzes the GTP-dependent successive addition of two or more gamma-linked L-glutamates to the L-lactyl phosphodiester of 7,8-didemethyl-8-hydroxy-5-deazariboflavin (F420-0) to form coenzyme F420-0-glutamyl-glutamate (F420-2) or polyglutamated F420 derivatives. The protein is Coenzyme F420:L-glutamate ligase of Halobacterium salinarum (strain ATCC 29341 / DSM 671 / R1).